The primary structure comprises 184 residues: Large ribosomal subunit protein uL15 (184 aa).

Residues 1-45 form a disordered region; sequence MDLSSLRPAKGAVKNKKRVGRGQGSGNGTTAGKGNNGQQSRSGYK. Over residues 21 to 35 the composition is skewed to gly residues; sequence RGQGSGNGTTAGKGN.

It belongs to the universal ribosomal protein uL15 family. Part of the 50S ribosomal subunit.

Functionally, binds to the 23S rRNA. The chain is Large ribosomal subunit protein uL15 from Pelodictyon phaeoclathratiforme (strain DSM 5477 / BU-1).